The following is a 216-amino-acid chain: MOB kinase activator 3B (216 aa).

The Zn(2+) site is built by cysteine 82, cysteine 87, histidine 164, and histidine 169.

It belongs to the MOB1/phocein family.

In terms of biological role, modulates LATS1 expression in the Hippo signaling pathway which plays a pivotal role in organ size control and tumor suppression by restricting proliferation and promoting apoptosis. This Homo sapiens (Human) protein is MOB kinase activator 3B.